The sequence spans 311 residues: Probable manganese-dependent inorganic pyrophosphatase (311 aa).

Positions 9, 13, 15, 77, 99, and 151 each coordinate Mn(2+).

The protein belongs to the PPase class C family. Mn(2+) serves as cofactor.

The protein resides in the cytoplasm. The catalysed reaction is diphosphate + H2O = 2 phosphate + H(+). The polypeptide is Probable manganese-dependent inorganic pyrophosphatase (Streptococcus sanguinis (strain SK36)).